Consider the following 214-residue polypeptide: Adenylate kinase (214 aa).

10–15 provides a ligand contact to ATP; it reads GVGKGT. An NMP region spans residues 30–59; the sequence is STGDILRAAVKELTPMGAKAKGYMDSGALV. AMP-binding positions include T31, R36, 57-59, 85-88, and Q92; these read ALV and GFPR. Positions 126–163 are LID; it reads GRRACANCGAGYHVDFAPSKVAGVCDACSGQLVQREDD. R127 is a binding site for ATP. Positions 130, 133, 150, and 153 each coordinate Zn(2+). R160 and R171 together coordinate AMP. G199 contacts ATP.

The protein belongs to the adenylate kinase family. In terms of assembly, monomer.

The protein resides in the cytoplasm. It catalyses the reaction AMP + ATP = 2 ADP. It functions in the pathway purine metabolism; AMP biosynthesis via salvage pathway; AMP from ADP: step 1/1. Catalyzes the reversible transfer of the terminal phosphate group between ATP and AMP. Plays an important role in cellular energy homeostasis and in adenine nucleotide metabolism. The polypeptide is Adenylate kinase (Geobacter sp. (strain M21)).